Here is a 423-residue protein sequence, read N- to C-terminus: MFKRYLSSTSSRRFTSILEEKAFQVTTYSRPEDLCITRGKNAKLYDDVNGKEYIDFTAGIAVTALGHANPKVAEILHHQANKLVHSSNLYFTKECLDLSEKIVEKTKQFGGQHDASRVFLCNSGTEANEAALKFAKKHGIMKNPSKQGIVAFENSFHGRTMGALSVTWNSKYRTPFGDLVPHVSFLNLNDEMTKLQSYIETKKDEIAGLIVEPIQGEGGVFPVEVEKLTGLKKICQDNDVIVIHDEIQCGLGRSGKLWAHAYLPSEAHPDIFTSAKALGNGFPIAATIVNEKVNNALRVGDHGTTYGGNPLACSVSNYVLDTIADEAFLKQVSKKSDILQKRLREIQAKYPNQIKTIRGKGLMLGAEFVEPPTEVIKKARELGLLIITAGKSTVRFVPALTIEDELIEEGMDAFEKAIEAVYA.

A mitochondrion-targeting transit peptide spans 1–13 (MFKRYLSSTSSRR). Position 276 is an N6-(pyridoxal phosphate)lysine (K276).

The protein belongs to the class-III pyridoxal-phosphate-dependent aminotransferase family. Pyridoxal 5'-phosphate is required as a cofactor.

Its subcellular location is the mitochondrion matrix. It carries out the reaction N(2)-acetyl-L-ornithine + 2-oxoglutarate = N-acetyl-L-glutamate 5-semialdehyde + L-glutamate. Its pathway is amino-acid biosynthesis; L-arginine biosynthesis; N(2)-acetyl-L-ornithine from L-glutamate: step 4/4. Catalyzes the conversion of N-acetylglutamate-gamma-semialdehyde (NAGSA) to N-acetylornithine in arginine biosynthesis. The sequence is that of Acetylornithine aminotransferase, mitochondrial (ARG8) from Saccharomyces cerevisiae (strain ATCC 204508 / S288c) (Baker's yeast).